An 81-amino-acid polypeptide reads, in one-letter code: Serine rich endogenous peptide 21 (81 aa).

The N-terminal stretch at 1–40 (MLELHFEFIDLNQPKMYKFVVCLLTLSFLLLSGLSNTALA) is a signal peptide. The SCOOP motif motif lies at 65-79 (KVRVLPSASRRGPGQ). Residues 71 to 73 (SAS) carry the SxS motif essential for MIK2 binding motif.

Belongs to the serine rich endogenous peptide (SCOOP) phytocytokine family. As to quaternary structure, interacts with MIK2 (via extracellular leucine-rich repeat domain); this interaction triggers the formation of complex between MIK2 and the BAK1/SERK3 and SERK4 coreceptors, and subsequent BAK1 activation by phosphorylation.

The protein localises to the cell membrane. Its subcellular location is the secreted. It is found in the extracellular space. It localises to the apoplast. Brassicaceae-specific phytocytokine (plant endogenous peptide released into the apoplast) perceived by MIK2 in a BAK1/SERK3 and SERK4 coreceptors-dependent manner, that modulates various physiological and antimicrobial processes including growth prevention and reactive oxygen species (ROS) response regulation. The protein is Serine rich endogenous peptide 21 of Arabidopsis thaliana (Mouse-ear cress).